Consider the following 1358-residue polypeptide: DNA-directed RNA polymerase subunit beta (1358 aa).

This sequence belongs to the RNA polymerase beta chain family. The RNAP catalytic core consists of 2 alpha, 1 beta, 1 beta' and 1 omega subunit. When a sigma factor is associated with the core the holoenzyme is formed, which can initiate transcription.

The catalysed reaction is RNA(n) + a ribonucleoside 5'-triphosphate = RNA(n+1) + diphosphate. Its function is as follows. DNA-dependent RNA polymerase catalyzes the transcription of DNA into RNA using the four ribonucleoside triphosphates as substrates. In Neorickettsia sennetsu (strain ATCC VR-367 / Miyayama) (Ehrlichia sennetsu), this protein is DNA-directed RNA polymerase subunit beta.